The chain runs to 81 residues: Cytotoxin 5b (81 aa).

The signal sequence occupies residues 1 to 21 (MKTLLLTLLVVTIVCLDLGYT). 4 disulfides stabilise this stretch: Cys24/Cys42, Cys35/Cys59, Cys63/Cys74, and Cys75/Cys80.

Belongs to the three-finger toxin family. Short-chain subfamily. Type IA cytotoxin sub-subfamily. Monomer in solution; Homodimer and oligomer in the presence of negatively charged lipids forming a pore with a size ranging between 20 and 30 Angstroms. As to expression, expressed by the venom gland.

It is found in the secreted. It localises to the target cell membrane. Shows cytolytic activity on many different cells by forming pore in lipid membranes. In vivo, increases heart rate or kills the animal by cardiac arrest. In addition, it binds to heparin with high affinity, interacts with Kv channel-interacting protein 1 (KCNIP1) in a calcium-independent manner, and binds to integrin alpha-V/beta-3 (ITGAV/ITGB3) with moderate affinity. The protein is Cytotoxin 5b of Naja sputatrix (Malayan spitting cobra).